The chain runs to 428 residues: FAD-dependent monooxygenase kojA (428 aa).

FAD contacts are provided by residues 52–60 (RLHKGPHYP) and 328–329 (SV).

The protein belongs to the aromatic-ring hydroxylase family. Requires FAD as cofactor.

Probable FAD-dependent monooxygenase; part of the gene cluster that mediates the biosynthesis of 5-hydroxy-2-hydroxymethyl-1,4-pyrone, also know as kojic acid, a by-product in the fermentation process of malting rice that acts as a chelation agent. Glucose might be converted to kojic acid by a combination of dehydrogenase and dehydratase reactions involving kojA and probably additional enzymes. In Aspergillus flavus (strain ATCC 200026 / FGSC A1120 / IAM 13836 / NRRL 3357 / JCM 12722 / SRRC 167), this protein is FAD-dependent monooxygenase kojA.